A 455-amino-acid chain; its full sequence is Rhodopsin (455 aa).

Over 1 to 34 the chain is Extracellular; that stretch reads MVESTTLVNQTWWYNPTVDIHPHWAKFDPIPDAV. A glycan (N-linked (GlcNAc...) asparagine) is linked at Asn9. The chain crosses the membrane as a helical span at residues 35–59; it reads YYSVGIFIGVVGIIGILGNGVVIYL. Residues 60–71 are Cytoplasmic-facing; that stretch reads FSKTKSLQTPAN. Residues 72–98 traverse the membrane as a helical segment; sequence MFIINLAMSDLSFSAINGFPLKTISAF. The Extracellular portion of the chain corresponds to 99–110; that stretch reads MKKWIFGKVACQ. Cys109 and Cys187 form a disulfide bridge. Residues 111 to 132 form a helical membrane-spanning segment; the sequence is LYGLLGGIFGFMSINTMAMISI. Residues 133–135 carry the 'Ionic lock' involved in activated form stabilization motif; it reads DRY. Residues 133-152 are Cytoplasmic-facing; the sequence is DRYNVIGRPMAASKKMSHRR. A helical membrane pass occupies residues 153–173; that stretch reads AFLMIIFVWMWSIVWSVGPVF. Residues 174-200 are Extracellular-facing; the sequence is NWGAYVPEGILTSCSFDYLSTDPSTRS. A helical transmembrane segment spans residues 201-225; sequence FILCMYFCGFMLPIIIIAFCYFNIV. Residues 226–262 lie on the Cytoplasmic side of the membrane; the sequence is MSVSNHEKEMAAMAKRLNAKELRKAQAGASAEMKLAK. A helical membrane pass occupies residues 263–284; that stretch reads ISMVIITQFMLSWSPYAIIALL. Topologically, residues 285-294 are extracellular; the sequence is AQFGPAEWVT. Residues 295–316 form a helical membrane-spanning segment; sequence PYAAELPVLFAKASAIHNPIVY. Position 306 is an N6-(retinylidene)lysine (Lys306). Over 317 to 455 the chain is Cytoplasmic; the sequence is SVSHPKFREA…QGVDNQAYQA (139 aa). Residues Cys337 and Cys338 are each lipidated (S-palmitoyl cysteine). A compositionally biased stretch (low complexity) spans 378 to 387; it reads QKMQAQQAAY. Residues 378-455 form a disordered region; sequence QKMQAQQAAY…QGVDNQAYQA (78 aa). Residues 388 to 433 are compositionally biased toward pro residues; sequence QPPPPPQGYPPQGYPPQGAYPPPQGYPPQGYPPQGYPPQGYPPQGA. Repeat copies occupy residues 395–399, 400–404, 412–416, 417–421, 422–426, and 427–431. The 6 X 5 AA repeats of G-Y-P-P-Q stretch occupies residues 395 to 431; it reads GYPPQGYPPQGAYPPPQGYPPQGYPPQGYPPQGYPPQ.

The protein belongs to the G-protein coupled receptor 1 family. Opsin subfamily. Post-translationally, contains one covalently linked retinal chromophore. Upon light absorption, the covalently bound 11-cis-retinal is converted to all-trans-retinal. After hydrolysis of the Schiff base and release of the covalently bound all-trans-retinal, active rhodopsin is regenerated by binding of a fresh molecule of 11-cis-retinal.

The protein resides in the cell projection. It localises to the rhabdomere membrane. Its function is as follows. Photoreceptor required for image-forming vision at low light intensity. Light-induced isomerization of 11-cis to all-trans retinal triggers a conformational change that activates signaling via G-proteins. Signaling mediates the activation of phospholipase C. Subsequent receptor phosphorylation mediates displacement of the bound G-protein alpha subunit by arrestin and terminates signaling. This chain is Rhodopsin (RHO), found in Enteroctopus dofleini (North Pacific giant octopus).